The sequence spans 92 residues: Small ribosomal subunit protein uS19c (92 aa).

This sequence belongs to the universal ribosomal protein uS19 family.

It is found in the plastid. Its subcellular location is the chloroplast. In terms of biological role, protein S19 forms a complex with S13 that binds strongly to the 16S ribosomal RNA. The protein is Small ribosomal subunit protein uS19c of Angiopteris evecta (Mule's foot fern).